Here is a 332-residue protein sequence, read N- to C-terminus: Ribosomal RNA small subunit methyltransferase H (332 aa).

Residues 39–41 (GGY), Asp56, Phe83, Asp100, and Gln107 contribute to the S-adenosyl-L-methionine site.

It belongs to the methyltransferase superfamily. RsmH family.

Its subcellular location is the cytoplasm. It carries out the reaction cytidine(1402) in 16S rRNA + S-adenosyl-L-methionine = N(4)-methylcytidine(1402) in 16S rRNA + S-adenosyl-L-homocysteine + H(+). In terms of biological role, specifically methylates the N4 position of cytidine in position 1402 (C1402) of 16S rRNA. The sequence is that of Ribosomal RNA small subunit methyltransferase H from Bartonella grahamii (strain as4aup).